Reading from the N-terminus, the 297-residue chain is Phosphatidylinositol N-acetylglucosaminyltransferase subunit C (297 aa).

Transmembrane regions (helical) follow at residues 67 to 87 (VFVV…WLFG), 88 to 108 (TGLA…GGDG), 153 to 173 (SVFM…AAIV), and 239 to 259 (AFGG…LLLF).

The protein belongs to the PIGC family. As to quaternary structure, component of the glycosylphosphatidylinositol-N-acetylglucosaminyltransferase (GPI-GnT) complex composed at least by PIGA, PIGC, PIGH, PIGP, PIGQ, PIGY and DPM2. Interacts with PIGQ. Interacts with the heterodimer PIGA:PIGH.

The protein resides in the endoplasmic reticulum membrane. The protein operates within glycolipid biosynthesis; glycosylphosphatidylinositol-anchor biosynthesis. Functionally, part of the glycosylphosphatidylinositol-N-acetylglucosaminyltransferase (GPI-GnT) complex that catalyzes the transfer of N-acetylglucosamine from UDP-N-acetylglucosamine to phosphatidylinositol and participates in the first step of GPI biosynthesis. The polypeptide is Phosphatidylinositol N-acetylglucosaminyltransferase subunit C (Rattus norvegicus (Rat)).